A 1241-amino-acid polypeptide reads, in one-letter code: Nephrin (1241 aa).

Positions 1–22 (MALGTTLRASLLLLGLLTEGLA) are cleaved as a signal peptide. At 23–1055 (QLAIPASVPR…EDQLPTEPPS (1033 aa)) the chain is on the extracellular side. 6 consecutive Ig-like C2-type domains span residues 27–130 (PASV…VILS), 143–234 (EAGT…SFTV), 242–333 (PPVI…HGIT), 340–434 (PSAI…KSLI), 440–540 (PAQK…TQLA), and 544–635 (PPTN…ETVS). The N-linked (GlcNAc...) asparagine glycan is linked to Asn40. 3 disulfides stabilise this stretch: Cys53–Cys111, Cys160–Cys217, and Cys265–Cys317. N-linked (GlcNAc...) asparagine glycans are attached at residues Asn356 and Asn401. Cys361 and Cys417 are oxidised to a cystine. The residue at position 432 (Ser432) is a Phosphoserine. A disulfide bridge links Cys465 with Cys528. Residues Asn547, Asn553, Asn564, Asn577, Asn680, and Asn708 are each glycosylated (N-linked (GlcNAc...) asparagine). Cysteines 567 and 623 form a disulfide. 2 Ig-like C2-type domains span residues 740 to 832 (PTIR…LLRL) and 838 to 939 (PQVE…VSIS). Cystine bridges form between Cys761–Cys816 and Cys863–Cys920. Asn908 carries N-linked (GlcNAc...) asparagine glycosylation. One can recognise a Fibronectin type-III domain in the interval 943-1038 (PPSGLKVVSL…TQLPITTPGL (96 aa)). Positions 1025 to 1057 (ADKGTQLPITTPGLHQPSGEPEDQLPTEPPSGP) are disordered. Residues 1056–1076 (GPSGLPLLPVLFALGGLLLLS) traverse the membrane as a helical segment. Over 1077 to 1241 (NASCVGGVLW…LPFELRGHLV (165 aa)) the chain is Cytoplasmic. Ser1098 bears the Phosphoserine mark. The span at 1099 to 1114 (EKTEAGSEEDRVRNEY) shows a compositional bias: basic and acidic residues. The disordered stretch occupies residues 1099–1137 (EKTEAGSEEDRVRNEYEESQWTGERDTQSSTVSTTEAEP). Thr1101 bears the Phosphothreonine mark. Residue Ser1105 is modified to Phosphoserine. Residues 1160 to 1241 (RGFTGEDEDM…LPFELRGHLV (82 aa)) are binds to NPHS2. A Phosphotyrosine; by FYN modification is found at Tyr1193.

It belongs to the immunoglobulin superfamily. As to quaternary structure, interacts with CD2AP (via C-terminal domain). Interacts with MAGI1 (via PDZ 2 and 3 domains) forming a tripartite complex with IGSF5/JAM4. Interacts with DDN; the interaction is direct. Self-associates (via the Ig-like domains). Also interacts (via the Ig-like domains) with KIRREL1/NEPH1 and KIRREL2; the interaction with KIRREL1 is dependent on KIRREL1 glycosylation. Interacts with KIRREL3. Forms a complex with ACTN4, CASK, IQGAP1, MAGI2, SPTAN1 and SPTBN1. Interacts with NPHS2. Interacts with phosphatidylinositol 3-kinase regulatory subunit PIK3R1; the interaction is reduced by high glucose levels. Post-translationally, phosphorylated at Tyr-1193 by FYN, leading to the recruitment and activation of phospholipase C-gamma-1/PLCG1. Tyrosine phosphorylation is reduced by high glucose levels. Dephosphorylated by tensin TNS2 which leads to reduced binding of NPHN1 to PIK3R1. Specifically expressed in podocytes of kidney glomeruli.

Its subcellular location is the cell membrane. Functionally, seems to play a role in the development or function of the kidney glomerular filtration barrier. Regulates glomerular vascular permeability. May anchor the podocyte slit diaphragm to the actin cytoskeleton. Plays a role in skeletal muscle formation through regulation of myoblast fusion. This chain is Nephrin (NPHS1), found in Homo sapiens (Human).